The primary structure comprises 201 residues: UPF0301 protein Rleg2_0617 (201 aa).

This sequence belongs to the UPF0301 (AlgH) family.

The chain is UPF0301 protein Rleg2_0617 from Rhizobium leguminosarum bv. trifolii (strain WSM2304).